We begin with the raw amino-acid sequence, 322 residues long: Quinolinate synthase (322 aa).

Residues His-37 and Ser-54 each contribute to the iminosuccinate site. Cys-99 contributes to the [4Fe-4S] cluster binding site. Residues 125-127 (YIN) and Ser-142 contribute to the iminosuccinate site. Residue Cys-185 coordinates [4Fe-4S] cluster. Iminosuccinate-binding positions include 211 to 213 (HPE) and Thr-228. Cys-278 is a binding site for [4Fe-4S] cluster.

This sequence belongs to the quinolinate synthase family. Type 2 subfamily. Requires [4Fe-4S] cluster as cofactor.

Its subcellular location is the cytoplasm. The catalysed reaction is iminosuccinate + dihydroxyacetone phosphate = quinolinate + phosphate + 2 H2O + H(+). Its pathway is cofactor biosynthesis; NAD(+) biosynthesis; quinolinate from iminoaspartate: step 1/1. Catalyzes the condensation of iminoaspartate with dihydroxyacetone phosphate to form quinolinate. In Prosthecochloris aestuarii (strain DSM 271 / SK 413), this protein is Quinolinate synthase.